A 438-amino-acid polypeptide reads, in one-letter code: GTPase Obg (438 aa).

The 159-residue stretch at 2–160 folds into the Obg domain; the sequence is SMFLDTAKIS…RELELELKIL (159 aa). Residues 128–147 form a disordered region; sequence NIRFATPRNPAPEIAENGEP. The 178-residue stretch at 161–338 folds into the OBG-type G domain; it reads ADVGLVGFPS…LLDATANLLA (178 aa). GTP is bound by residues 167–174, 192–196, 214–217, 284–287, and 319–321; these read GFPSVGKS, FTTIV, DLPG, NKMD, and STL. Residues S174 and T194 each coordinate Mg(2+). The region spanning 360–438 is the OCT domain; the sequence is GFSEEEKAFE…IGNFEFEFVD (79 aa).

This sequence belongs to the TRAFAC class OBG-HflX-like GTPase superfamily. OBG GTPase family. As to quaternary structure, monomer. It depends on Mg(2+) as a cofactor.

The protein localises to the cytoplasm. Functionally, an essential GTPase which binds GTP, GDP and possibly (p)ppGpp with moderate affinity, with high nucleotide exchange rates and a fairly low GTP hydrolysis rate. Plays a role in control of the cell cycle, stress response, ribosome biogenesis and in those bacteria that undergo differentiation, in morphogenesis control. The polypeptide is GTPase Obg (Streptococcus uberis (strain ATCC BAA-854 / 0140J)).